The chain runs to 219 residues: GPI-anchored hemophore PGA7 (219 aa).

A signal peptide spans 1-13; it reads MHFIFYLILLVSA. The region spanning 17 to 126 is the CFEM domain; the sequence is GNFGTYPKVP…SMLSTAAGDA (110 aa). Disulfide bonds link C45–C85, C49–C80, C59–C66, and C68–C101. Heme is bound at residue D63. The segment at 151–194 is disordered; the sequence is VVSETGSASETGSSESAQSTTTGSSSTGSSSTDSSSSSSSSPSS. Low complexity predominate over residues 153–194; that stretch reads SETGSASETGSSESAQSTTTGSSSTGSSSTDSSSSSSSSPSS. Residue S194 is the site of GPI-anchor amidated serine attachment. The propeptide at 195–219 is removed in mature form; that stretch reads SANFAVLQTGGIGSVILGFMMYLLV.

This sequence belongs to the RBT5 family. As to quaternary structure, interacts with RBT5. In terms of processing, the GPI-anchor is attached to the protein in the endoplasmic reticulum and serves to target the protein to the cell surface. There, the glucosamine-inositol phospholipid moiety is cleaved off and the GPI-modified mannoprotein is covalently attached via its lipidless GPI glycan remnant to the 1,6-beta-glucan of the outer cell wall layer.

The protein localises to the secreted. Its subcellular location is the cell wall. The protein resides in the cell membrane. GPI-linked hyphal surface heme-binding protein involved in heme-iron utilization. Heme transfer occurs between PGA7, RBT5 and CSA2 supporting a model in which the 3 CFEM proteins cooperate in a heme-acquisition system and form a cross-cell wall heme-transfer cascade. The ability to acquire iron from host tissues is a major virulence factor of pathogenic microorganisms. Required for biofilm formation. This Candida albicans (strain SC5314 / ATCC MYA-2876) (Yeast) protein is GPI-anchored hemophore PGA7.